The sequence spans 297 residues: UDP-N-acetylenolpyruvoylglucosamine reductase (297 aa).

In terms of domain architecture, FAD-binding PCMH-type spans 27 to 191; it reads TGGNADIFVM…LDATFSLELE (165 aa). Arginine 170 is a catalytic residue. Serine 220 functions as the Proton donor in the catalytic mechanism. Residue glutamate 290 is part of the active site.

Belongs to the MurB family. FAD serves as cofactor.

The protein localises to the cytoplasm. It carries out the reaction UDP-N-acetyl-alpha-D-muramate + NADP(+) = UDP-N-acetyl-3-O-(1-carboxyvinyl)-alpha-D-glucosamine + NADPH + H(+). It participates in cell wall biogenesis; peptidoglycan biosynthesis. Functionally, cell wall formation. This Listeria welshimeri serovar 6b (strain ATCC 35897 / DSM 20650 / CCUG 15529 / CIP 8149 / NCTC 11857 / SLCC 5334 / V8) protein is UDP-N-acetylenolpyruvoylglucosamine reductase.